We begin with the raw amino-acid sequence, 209 residues long: Large ribosomal subunit protein uL3 (209 aa).

It belongs to the universal ribosomal protein uL3 family. Part of the 50S ribosomal subunit. Forms a cluster with proteins L14 and L19.

Its function is as follows. One of the primary rRNA binding proteins, it binds directly near the 3'-end of the 23S rRNA, where it nucleates assembly of the 50S subunit. This chain is Large ribosomal subunit protein uL3, found in Moorella thermoacetica (strain ATCC 39073 / JCM 9320).